The primary structure comprises 176 residues: MKNKTEYYDQFIAKVPDFPKKGVLFYDITSVLLKPEVYTSLINEAYSFYNLKKIDCIAVVESRGYLIGAPLSLKMQLPLVLIRKEGKLPREVFGEEYELEYGFGKIEVHKDDVRMYSNILLIDDILATGGTLKSSAILLERAGGRVKDIFCFIELCGINGRRILEDYDVNSLVRYN.

The protein belongs to the purine/pyrimidine phosphoribosyltransferase family. In terms of assembly, homodimer.

It localises to the cytoplasm. The catalysed reaction is AMP + diphosphate = 5-phospho-alpha-D-ribose 1-diphosphate + adenine. It functions in the pathway purine metabolism; AMP biosynthesis via salvage pathway; AMP from adenine: step 1/1. Catalyzes a salvage reaction resulting in the formation of AMP, that is energically less costly than de novo synthesis. The protein is Adenine phosphoribosyltransferase of Borrelia garinii subsp. bavariensis (strain ATCC BAA-2496 / DSM 23469 / PBi) (Borreliella bavariensis).